Consider the following 85-residue polypeptide: MRKNASALKRSRQNLKRKIRNVSVESELKTIEKRCINMIKAGRKDEAIEFFKFVAKKLDTAARKRIIHKNKAARKKSRLNILLLK.

Belongs to the bacterial ribosomal protein bS20 family.

In terms of biological role, binds directly to 16S ribosomal RNA. The protein is Small ribosomal subunit protein bS20 of Borrelia garinii subsp. bavariensis (strain ATCC BAA-2496 / DSM 23469 / PBi) (Borreliella bavariensis).